A 492-amino-acid chain; its full sequence is N-succinylglutamate 5-semialdehyde dehydrogenase (492 aa).

Residue 220-225 (GSASTG) participates in NAD(+) binding. Active-site residues include glutamate 243 and cysteine 277.

It belongs to the aldehyde dehydrogenase family. AstD subfamily.

It carries out the reaction N-succinyl-L-glutamate 5-semialdehyde + NAD(+) + H2O = N-succinyl-L-glutamate + NADH + 2 H(+). It functions in the pathway amino-acid degradation; L-arginine degradation via AST pathway; L-glutamate and succinate from L-arginine: step 4/5. Functionally, catalyzes the NAD-dependent reduction of succinylglutamate semialdehyde into succinylglutamate. This chain is N-succinylglutamate 5-semialdehyde dehydrogenase, found in Salmonella dublin (strain CT_02021853).